A 187-amino-acid chain; its full sequence is MSEMAELSELYEESSDLQMDVMPGEGDLPQMEVGSGSRELSLRPSRSGAQQLEEEGPMEEEEAQPMAAPEGKRSLANGPNAGEQPGQVAGADFESEDEGEEFDDWEDDYDYPEEEQLSGAGYRVSAALEEADKMFLRTREPALDGGFQMHYEKTPFDQLAFIEELFSLMVVNRLTEELGCDEIIDRE.

The tract at residues 1–118 is disordered; it reads MSEMAELSEL…YDYPEEEQLS (118 aa). 2 stretches are compositionally biased toward acidic residues: residues 52 to 63 and 93 to 116; these read LEEEGPMEEEEA and FESEDEGEEFDDWEDDYDYPEEEQ. The tract at residues 54–120 is interaction with NR0B2; that stretch reads EEGPMEEEEA…YPEEEQLSGA (67 aa). The LXCXE motif motif lies at 178–182; it reads LGCDE.

Interacts via its LXCXE motif with the entire pocket region of RB1. Interacts with EP300, NR0B2 and TRIM27. Ubiquitinated in U2OS osteosarcoma cells and is rapidly degraded by proteasome as cells exit the cell cycle exit. In terms of tissue distribution, widely expressed. Most abundantly expressed in heart, skeletal muscle, pancreas, brain and testis. Expressed at much lower levels in placenta and peripheral blood leukocyte. Barely detectable in lung. Also weakly expressed in lung carcinoma A-549 and various leukemia cell lines.

Its subcellular location is the nucleus. It localises to the cytoplasm. In terms of biological role, interacts with RB1 and EP300 and acts as a repressor of MYOD1 transactivation. Inhibits EP300 and CBP histone acetyltransferase activity. May be involved in coupling cell cycle exit to the transcriptional activation of genes required for cellular differentiation. May act as a candidate coinhibitory factor for NR0B2 that can be directly linked to transcription inhibitory mechanisms. The chain is EP300-interacting inhibitor of differentiation 1 from Homo sapiens (Human).